The following is a 263-amino-acid chain: 3-methyl-2-oxobutanoate hydroxymethyltransferase (263 aa).

D45 and D84 together coordinate Mg(2+). 3-methyl-2-oxobutanoate is bound by residues 45 to 46, D84, and K112; that span reads DS. E114 lines the Mg(2+) pocket. E180 (proton acceptor) is an active-site residue.

It belongs to the PanB family. Homodecamer; pentamer of dimers. Requires Mg(2+) as cofactor.

It localises to the cytoplasm. The catalysed reaction is 3-methyl-2-oxobutanoate + (6R)-5,10-methylene-5,6,7,8-tetrahydrofolate + H2O = 2-dehydropantoate + (6S)-5,6,7,8-tetrahydrofolate. It functions in the pathway cofactor biosynthesis; (R)-pantothenate biosynthesis; (R)-pantoate from 3-methyl-2-oxobutanoate: step 1/2. Catalyzes the reversible reaction in which hydroxymethyl group from 5,10-methylenetetrahydrofolate is transferred onto alpha-ketoisovalerate to form ketopantoate. This is 3-methyl-2-oxobutanoate hydroxymethyltransferase from Klebsiella pneumoniae subsp. pneumoniae (strain ATCC 700721 / MGH 78578).